The sequence spans 127 residues: Histone H2B.2 (127 aa).

The segment at 1 to 35 (MAPKAEKKPASKAPAAKKTTASTDASKKRTKTRKE) is disordered. N6-acetyllysine; alternate is present on residues Lys7 and Lys8. Residues Lys7 and Lys8 each participate in a glycyl lysine isopeptide (Lys-Gly) (interchain with G-Cter in SUMO); alternate cross-link. Ser11 carries the phosphoserine modification. Residues 11 to 24 (SKAPAAKKTTASTD) show a composition bias toward low complexity. Lys12 carries the N6-acetyllysine modification. A Glycyl lysine isopeptide (Lys-Gly) (interchain with G-Cter in ubiquitin) cross-link involves residue Lys120.

Belongs to the histone H2B family. As to quaternary structure, the nucleosome is a histone octamer containing two molecules each of H2A, H2B, H3 and H4 assembled in one H3-H4 heterotetramer and two H2A-H2B heterodimers. The octamer wraps approximately 147 bp of DNA. In terms of processing, monoubiquitinated by the UBC2-BRE1 complex to form H2BK123ub1. H2BK123ub1 gives a specific tag for epigenetic transcriptional activation and is also prerequisite for H3K4me and H3K79me formation. H2BK123ub1 also modulates the formation of double-strand breaks during meiosis and is a prerequisite for DNA-damage checkpoint activation. Phosphorylated by STE20 to form H2BS10ph during progression through meiotic prophase. May be correlated with chromosome condensation. Post-translationally, acetylation of N-terminal lysines and particularly formation of H2BK11ac has a positive effect on transcription. In terms of processing, sumoylation to form H2BK6su or H2BK7su occurs preferentially near the telomeres and represses gene transcription.

Its subcellular location is the nucleus. The protein resides in the chromosome. In terms of biological role, core component of nucleosome. Nucleosomes wrap and compact DNA into chromatin, limiting DNA accessibility to the cellular machineries which require DNA as a template. Histones thereby play a central role in transcription regulation, DNA repair, DNA replication and chromosomal stability. DNA accessibility is regulated via a complex set of post-translational modifications of histones, also called histone code, and nucleosome remodeling. The sequence is that of Histone H2B.2 (HTB2) from Eremothecium gossypii (strain ATCC 10895 / CBS 109.51 / FGSC 9923 / NRRL Y-1056) (Yeast).